Reading from the N-terminus, the 210-residue chain is Probable membrane protein Rv1733c (210 aa).

The next 2 membrane-spanning stretches (helical) occupy residues 43–63 (AVVM…AAAA) and 165–185 (ALAA…LLAL).

The protein localises to the cell membrane. The polypeptide is Probable membrane protein Rv1733c (Mycobacterium tuberculosis (strain ATCC 25618 / H37Rv)).